The chain runs to 151 residues: D-aminoacyl-tRNA deacylase (151 aa).

Residues 137-138 (GP) carry the Gly-cisPro motif, important for rejection of L-amino acids motif.

This sequence belongs to the DTD family. Homodimer.

Its subcellular location is the cytoplasm. The catalysed reaction is glycyl-tRNA(Ala) + H2O = tRNA(Ala) + glycine + H(+). The enzyme catalyses a D-aminoacyl-tRNA + H2O = a tRNA + a D-alpha-amino acid + H(+). Functionally, an aminoacyl-tRNA editing enzyme that deacylates mischarged D-aminoacyl-tRNAs. Also deacylates mischarged glycyl-tRNA(Ala), protecting cells against glycine mischarging by AlaRS. Acts via tRNA-based rather than protein-based catalysis; rejects L-amino acids rather than detecting D-amino acids in the active site. By recycling D-aminoacyl-tRNA to D-amino acids and free tRNA molecules, this enzyme counteracts the toxicity associated with the formation of D-aminoacyl-tRNA entities in vivo and helps enforce protein L-homochirality. The sequence is that of D-aminoacyl-tRNA deacylase from Acaryochloris marina (strain MBIC 11017).